The chain runs to 185 residues: ATP-dependent protease subunit HslV (185 aa).

The active site involves T2. Residues G157, C160, and T163 each contribute to the Na(+) site.

This sequence belongs to the peptidase T1B family. HslV subfamily. As to quaternary structure, a double ring-shaped homohexamer of HslV is capped on each side by a ring-shaped HslU homohexamer. The assembly of the HslU/HslV complex is dependent on binding of ATP.

The protein localises to the cytoplasm. It catalyses the reaction ATP-dependent cleavage of peptide bonds with broad specificity.. Allosterically activated by HslU binding. In terms of biological role, protease subunit of a proteasome-like degradation complex believed to be a general protein degrading machinery. The protein is ATP-dependent protease subunit HslV of Vibrio cholerae serotype O1 (strain ATCC 39315 / El Tor Inaba N16961).